The following is a 440-amino-acid chain: Protein C-ets-1 (440 aa).

An N6-acetyllysine; alternate mark is found at Lys8 and Lys15. Residues Lys8 and Lys15 each participate in a glycyl lysine isopeptide (Lys-Gly) (interchain with G-Cter in SUMO2); alternate cross-link. Lys15 is covalently cross-linked (Glycyl lysine isopeptide (Lys-Gly) (interchain with G-Cter in SUMO); alternate). Thr38 is modified (phosphothreonine; by MAPK). Residues 51-136 (ATFSGFTKEQ…EHLEILQKED (86 aa)) enclose the PNT domain. The segment at 130-243 (EILQKEDVKP…DNMCLGRASR (114 aa)) is activation domain; required for transcription activation. Residue Lys138 forms a Glycyl lysine isopeptide (Lys-Gly) (interchain with G-Cter in SUMO2) linkage. Phosphotyrosine is present on Tyr223. Lys227 is covalently cross-linked (Glycyl lysine isopeptide (Lys-Gly) (interchain with G-Cter in SUMO)). Ser251 is subject to Phosphoserine; by CaMK2. A Phosphoserine modification is found at Ser254. At Thr265 the chain carries Phosphothreonine. Residues Ser267 and Ser270 each carry the phosphoserine modification. A phosphoserine; by CaMK2 mark is found at Ser282 and Ser285. The helix HI-1 stretch occupies residues 304–312 (FKDYVRDRA). Lys305 carries the post-translational modification N6-acetyllysine. Residues 323–330 (AAALAGYT) form a helix HI-2 region. Positions 335–415 (IQLWQFLLEL…AGKRYVYRFV (81 aa)) form a DNA-binding region, ETS. Residues 418-422 (LQSLL) form a helix H4 region. The helix H5 stretch occupies residues 426-432 (PEELHAM).

The protein belongs to the ETS family. As to quaternary structure, binds DNA as a homodimer; homodimerization is required for transcription activation. Interacts with MAF and MAFB. Interacts with PAX5; the interaction alters DNA-binding properties. Interacts with DAXX. Interacts with UBE2I. Interacts with SP100; the interaction is direct and modulates ETS1 transcriptional activity. In terms of processing, phosphorylation at Ser-251, Ser-282 and Ser-285 by CaMK2/CaMKII in response to calcium signaling decreases affinity for DNA: an increasing number of phosphoserines causes DNA-binding to become progressively weaker. Sumoylated on Lys-15 and Lys-227, preferentially with SUMO2; which inhibits transcriptional activity. Post-translationally, ubiquitinated; which induces proteasomal degradation.

Its subcellular location is the nucleus. The protein localises to the cytoplasm. With respect to regulation, autoinhibited by a module composed of four alpha helices (HI-1, HI-2, H4, and H5) that flank the DNA-binding ETS domain, reducing the affinity for DNA. Phosphorylation by CaMK2/CaMKII in response to calcium signaling decreases affinity for DNA. In terms of biological role, transcription factor. Directly controls the expression of cytokine and chemokine genes in a wide variety of different cellular contexts. May control the differentiation, survival and proliferation of lymphoid cells. May also regulate angiogenesis through regulation of expression of genes controlling endothelial cell migration and invasion. In Mus musculus (Mouse), this protein is Protein C-ets-1 (Ets1).